A 62-amino-acid chain; its full sequence is UPF0434 protein Smed_3047 (62 aa).

It belongs to the UPF0434 family.

This is UPF0434 protein Smed_3047 from Sinorhizobium medicae (strain WSM419) (Ensifer medicae).